The following is a 931-amino-acid chain: Beta-mannosidase A (931 aa).

An N-terminal signal peptide occupies residues 1 to 21; the sequence is MRHSIGLAAALLAPTLPVALG. Residues Asn40, Asn79, Asn247, Asn282, and Asn347 are each glycosylated (N-linked (GlcNAc...) asparagine). Catalysis depends on Glu479, which acts as the Proton donor. 8 N-linked (GlcNAc...) asparagine glycosylation sites follow: Asn550, Asn608, Asn658, Asn738, Asn790, Asn798, Asn830, and Asn918.

It belongs to the glycosyl hydrolase 2 family. Beta-mannosidase A subfamily. In terms of assembly, homodimer. N-glycosylated.

The protein localises to the secreted. It carries out the reaction Hydrolysis of terminal, non-reducing beta-D-mannose residues in beta-D-mannosides.. Its pathway is glycan metabolism; N-glycan degradation. Functionally, exoglycosidase that cleaves the single beta-linked mannose residue from the non-reducing end of beta-mannosidic oligosaccharides of various complexity and length. Involved in the degradation of polymeric mannan and galactomannan. Releases the terminal mannose residue from mannobiose and mannotriose, as well as from galactosyl-mannobiose (GM2), galactosyl-mannotriose (GM3) and di-galactosyl-mannopentaose (G2M5). The protein is Beta-mannosidase A (mndA) of Aspergillus niger.